The primary structure comprises 483 residues: Probable L-xylulose kinase (483 aa).

The protein belongs to the FGGY kinase family. As to quaternary structure, homodimer.

The enzyme catalyses L-xylulose + ATP = L-xylulose 5-phosphate + ADP + H(+). This Pasteurella multocida (strain Pm70) protein is Probable L-xylulose kinase (lyx).